Here is a 330-residue protein sequence, read N- to C-terminus: AH receptor-interacting protein (330 aa).

The PPIase FKBP-type domain occupies 31–121 (GTKATFHFRT…KDPLEGQRHC (91 aa)). Ser43 is subject to Phosphoserine. 3 TPR repeats span residues 179–212 (VPVI…LKNL), 231–264 (TPLL…YDDN), and 265–298 (VKAY…DPAL).

Interacts with RET in the pituitary gland; this interaction prevents the formation of the AIP-survivin complex.

The protein localises to the cytoplasm. Functionally, may play a positive role in AHR-mediated (aromatic hydrocarbon receptor) signaling, possibly by influencing its receptivity for ligand and/or its nuclear targeting. In Mus musculus (Mouse), this protein is AH receptor-interacting protein (Aip).